A 255-amino-acid chain; its full sequence is Indole-3-glycerol phosphate synthase (255 aa).

Belongs to the TrpC family.

The catalysed reaction is 1-(2-carboxyphenylamino)-1-deoxy-D-ribulose 5-phosphate + H(+) = (1S,2R)-1-C-(indol-3-yl)glycerol 3-phosphate + CO2 + H2O. The protein operates within amino-acid biosynthesis; L-tryptophan biosynthesis; L-tryptophan from chorismate: step 4/5. The sequence is that of Indole-3-glycerol phosphate synthase from Streptococcus thermophilus (strain ATCC BAA-491 / LMD-9).